The following is a 104-amino-acid chain: Glutaredoxin (104 aa).

Residues 3-103 enclose the Glutaredoxin domain; the sequence is MIKAQELVSS…PLLTEAGAVK (101 aa). An intrachain disulfide couples Cys-23 to Cys-26.

Belongs to the glutaredoxin family. CPYC subfamily.

Its subcellular location is the cytoplasm. In terms of biological role, has a glutathione-disulfide oxidoreductase activity in the presence of NADPH and glutathione reductase. Reduces low molecular weight disulfides and proteins. The polypeptide is Glutaredoxin (Vernicia fordii (Tung)).